A 328-amino-acid polypeptide reads, in one-letter code: C-type lectin domain family 11 member A (328 aa).

Residues Met1 to Gly21 form the signal peptide. The interval Pro58–Asp111 is disordered. Residues Leu188–Glu325 form the C-type lectin domain. Intrachain disulfides connect Cys209/Cys324 and Cys301/Cys316.

O-glycosylated. Probably sulfated on the O-glycans.

The protein localises to the cytoplasm. The protein resides in the secreted. In terms of biological role, promotes osteogenesis by stimulating the differentiation of mesenchymal progenitors into mature osteoblasts. Important for repair and maintenance of adult bone. The protein is C-type lectin domain family 11 member A (Clec11a) of Rattus norvegicus (Rat).